A 272-amino-acid polypeptide reads, in one-letter code: Phosphatidylglycerol--prolipoprotein diacylglyceryl transferase (272 aa).

Transmembrane regions (helical) follow at residues 24 to 44 (WYGIAYVLALLVALWVAKWIA), 59 to 79 (YFIWVEVGVILGARLGYILFY), 102 to 122 (FIGIRGMSYHGAVIGFLIASF), and 129 to 149 (GVKFWMLMDLVGISVPLGYVF). Residue arginine 151 coordinates a 1,2-diacyl-sn-glycero-3-phospho-(1'-sn-glycerol). 3 consecutive transmembrane segments (helical) span residues 180–200 (PSQLYEAFLEGIVLFVILYAW), 208–228 (GQLGIMYLILYALARFVAEFW), and 244–264 (MGQLLSLAMAIPCLVLWGYLA).

The protein belongs to the Lgt family.

The protein resides in the cell inner membrane. The catalysed reaction is L-cysteinyl-[prolipoprotein] + a 1,2-diacyl-sn-glycero-3-phospho-(1'-sn-glycerol) = an S-1,2-diacyl-sn-glyceryl-L-cysteinyl-[prolipoprotein] + sn-glycerol 1-phosphate + H(+). It functions in the pathway protein modification; lipoprotein biosynthesis (diacylglyceryl transfer). Catalyzes the transfer of the diacylglyceryl group from phosphatidylglycerol to the sulfhydryl group of the N-terminal cysteine of a prolipoprotein, the first step in the formation of mature lipoproteins. The sequence is that of Phosphatidylglycerol--prolipoprotein diacylglyceryl transferase from Wolinella succinogenes (strain ATCC 29543 / DSM 1740 / CCUG 13145 / JCM 31913 / LMG 7466 / NCTC 11488 / FDC 602W) (Vibrio succinogenes).